The primary structure comprises 486 residues: Ribosomal RNA small subunit methyltransferase F (486 aa).

S-adenosyl-L-methionine contacts are provided by residues 124–130 (ASAPGSK), Glu-148, Asp-175, and Asp-193. Cys-246 functions as the Nucleophile in the catalytic mechanism.

Belongs to the class I-like SAM-binding methyltransferase superfamily. RsmB/NOP family.

It localises to the cytoplasm. The catalysed reaction is cytidine(1407) in 16S rRNA + S-adenosyl-L-methionine = 5-methylcytidine(1407) in 16S rRNA + S-adenosyl-L-homocysteine + H(+). In terms of biological role, specifically methylates the cytosine at position 1407 (m5C1407) of 16S rRNA. The sequence is that of Ribosomal RNA small subunit methyltransferase F from Shewanella baltica (strain OS155 / ATCC BAA-1091).